The sequence spans 413 residues: Aspartate aminotransferase, cytoplasmic (413 aa).

Positions 39 and 141 each coordinate L-aspartate. The residue at position 149 (S149) is a Phosphoserine. Residue N195 coordinates L-aspartate. At K259 the chain carries N6-(pyridoxal phosphate)lysine. R387 is an L-aspartate binding site.

Belongs to the class-I pyridoxal-phosphate-dependent aminotransferase family. In terms of assembly, homodimer. The cofactor is pyridoxal 5'-phosphate.

Its subcellular location is the cytoplasm. It catalyses the reaction L-aspartate + 2-oxoglutarate = oxaloacetate + L-glutamate. The catalysed reaction is L-cysteine + 2-oxoglutarate = 2-oxo-3-sulfanylpropanoate + L-glutamate. The enzyme catalyses (2S)-2-aminobutanoate + 2-oxoglutarate = 2-oxobutanoate + L-glutamate. It carries out the reaction 3-sulfino-L-alanine + 2-oxoglutarate = 3-sulfinopyruvate + L-glutamate. Its function is as follows. Biosynthesis of L-glutamate from L-aspartate or L-cysteine. Important regulator of levels of glutamate, the major excitatory neurotransmitter of the vertebrate central nervous system. Acts as a scavenger of glutamate in brain neuroprotection. The aspartate aminotransferase activity is involved in hepatic glucose synthesis during development and in adipocyte glyceroneogenesis. Using L-cysteine as substrate, regulates levels of mercaptopyruvate, an important source of hydrogen sulfide. Mercaptopyruvate is converted into H(2)S via the action of 3-mercaptopyruvate sulfurtransferase (3MST). Hydrogen sulfide is an important synaptic modulator and neuroprotectant in the brain. This Pan troglodytes (Chimpanzee) protein is Aspartate aminotransferase, cytoplasmic.